Here is a 344-residue protein sequence, read N- to C-terminus: Phosphate acyltransferase (344 aa).

Belongs to the PlsX family. As to quaternary structure, homodimer. Probably interacts with PlsY.

It localises to the cytoplasm. The catalysed reaction is a fatty acyl-[ACP] + phosphate = an acyl phosphate + holo-[ACP]. Its pathway is lipid metabolism; phospholipid metabolism. Functionally, catalyzes the reversible formation of acyl-phosphate (acyl-PO(4)) from acyl-[acyl-carrier-protein] (acyl-ACP). This enzyme utilizes acyl-ACP as fatty acyl donor, but not acyl-CoA. This Sphingopyxis alaskensis (strain DSM 13593 / LMG 18877 / RB2256) (Sphingomonas alaskensis) protein is Phosphate acyltransferase.